Consider the following 138-residue polypeptide: Basic phospholipase A2 canebraxin B (138 aa).

The signal sequence occupies residues 1–16 (MRALWIVAVLLVAVEG). Cystine bridges form between Cys-42-Cys-131, Cys-44-Cys-60, Cys-59-Cys-111, Cys-65-Cys-138, Cys-66-Cys-104, Cys-73-Cys-97, and Cys-91-Cys-102. Ca(2+) is bound by residues Tyr-43, Gly-45, and Gly-47. Residue His-63 is part of the active site. Ca(2+) is bound at residue Asp-64. Asp-105 is a catalytic residue.

This sequence belongs to the phospholipase A2 family. Group II subfamily. As to quaternary structure, heterodimer of an acidic subunit and a basic chain. The acidic subunit is non-toxic, without enzymatic activity and comprises 3 peptides that are cross-linked by 7 disulfide bridges. The basic subunit is toxic, has phospholipase A2 activity and is composed of a single chain. Requires Ca(2+) as cofactor. Expressed by the venom gland.

It is found in the secreted. It catalyses the reaction a 1,2-diacyl-sn-glycero-3-phosphocholine + H2O = a 1-acyl-sn-glycero-3-phosphocholine + a fatty acid + H(+). Its function is as follows. Snake venom phospholipase A2 (PLA2) that shows presynaptic neurotoxicity. PLA2 catalyzes the calcium-dependent hydrolysis of the 2-acyl groups in 3-sn-phosphoglycerides. The polypeptide is Basic phospholipase A2 canebraxin B (Crotalus horridus (Timber rattlesnake)).